A 291-amino-acid polypeptide reads, in one-letter code: MKDYLVKALAFDGEVRAYSVRTTNMVSEAQRRHDTWRTASAALGRSLTAGAMMGAMLKGEQKLTIKVEGNGPIGPIVIDAHANGDVRGYVTNPHVDFESTEQGKLRVYQAVGTEGNVTVIKDIGMREPFIGQSPIVSGELGEDFTYYFAVSEQTPSSVGVGVLVNGDDSILAAGGFILQIMPGAQEETISFIEERLKKIPPVSTMIEKGLSPEGILNEILGEENVKVLETMDVQFNCTCSRERIESVLISLGKAELEQIRGEEEETEVHCHFCNERYKFSKDDIKQLIETL.

2 disulfide bridges follow: Cys-237-Cys-239 and Cys-270-Cys-273.

It belongs to the HSP33 family. Post-translationally, under oxidizing conditions two disulfide bonds are formed involving the reactive cysteines. Under reducing conditions zinc is bound to the reactive cysteines and the protein is inactive.

It localises to the cytoplasm. Its function is as follows. Redox regulated molecular chaperone. Protects both thermally unfolding and oxidatively damaged proteins from irreversible aggregation. Plays an important role in the bacterial defense system toward oxidative stress. The sequence is that of 33 kDa chaperonin from Bacillus cytotoxicus (strain DSM 22905 / CIP 110041 / 391-98 / NVH 391-98).